The following is a 489-amino-acid chain: FAD-linked oxidoreductase tazG (489 aa).

Positions 1–17 (MVAFSAILQTALGLSAA) are cleaved as a signal peptide. N-linked (GlcNAc...) asparagine glycosylation is present at N38. Positions 55-224 (APSYGAGAIK…TSATYRLPEV (170 aa)) constitute an FAD-binding PCMH-type domain. N-linked (GlcNAc...) asparagine glycosylation is found at N242 and N306.

This sequence belongs to the oxygen-dependent FAD-linked oxidoreductase family. It depends on FAD as a cofactor.

It functions in the pathway secondary metabolite biosynthesis. Functionally, FAD-linked oxidoreductase; part of the gene cluster that mediates the biosynthesis of azaterrilone A and other azaphilones, a class of fungal metabolites characterized by a highly oxygenated pyrano-quinone bicyclic core and exhibiting a broad range of bioactivities. The first step of the pathway begins with the non-reducing polyketide synthase tazA that assembles one acetyl-CoA starter unit, five malonyl-CoA units, and catalyzes a series of Claisen condensations, methylation, PT-mediated cyclization, and finally releases the first hexaketide precursor through the R-domain. The tazA product then undergoes reduction on its terminal ketone and the following pyran-ring formation by yet undetermined enzyme(s). Dehydration and enoyl reduction, possibly involving the trans-enoyl reductase tazE leads to the next intermediate. TazD is predicted as an acetyltransferase and might catalyze the acetylation steps leading to the synthesis of azaterrilone A. Azaterrilone A is not the final product of the taz pathway and both the highly reducing polyketide synthase tazB and the dual enzyme tazHJ catalyze late steps of the pathway, leading to the production of the 2 final stereoisomers that contain additional polyketide modification whose structures have still to be determined. The sequence is that of FAD-linked oxidoreductase tazG from Aspergillus terreus (strain NIH 2624 / FGSC A1156).